A 374-amino-acid chain; its full sequence is P2Y purinoceptor 2 (374 aa).

At 1-32 (MAAGLDSWNSTINGTWEGDELGYKCRFNEDFK) the chain is on the extracellular side. 2 N-linked (GlcNAc...) asparagine glycosylation sites follow: N9 and N13. A helical transmembrane segment spans residues 33-59 (YVLLPVSYGVVCVLGLCLNVVALYIFL). At 60-70 (CRLKTWNASTT) the chain is on the cytoplasmic side. The helical transmembrane segment at 71 to 93 (YMFHLAVSDSLYAASLPLLVYYY) threads the bilayer. Over 94–110 (AQGDHWPFSTVLCKLVR) the chain is Extracellular. A disulfide bridge links C106 with C183. Residues 111–129 (FLFYTNLYCSILFLTCISV) form a helical membrane-spanning segment. Residues 130 to 152 (HRCLGVLRPLHSLSWGHARYARR) lie on the Cytoplasmic side of the membrane. The helical transmembrane segment at 153–172 (VAAVVWVLVLACQAPVLYFV) threads the bilayer. At 173–194 (TTSVRGTRITCHDTSARELFSH) the chain is on the extracellular side. Residues 195 to 220 (FVAYSSVMLGLLFAVPFSIILVCYVL) form a helical membrane-spanning segment. At 221-245 (MARRLLKPAYGTTGLPRAKRKSVRT) the chain is on the cytoplasmic side. The chain crosses the membrane as a helical span at residues 246-268 (IALVLAVFALCFLPFHVTRTLYY). Residues 269 to 286 (SFRSLDLSCHTLNAINMA) lie on the Extracellular side of the membrane. Residues 287–308 (YKITRPLASANSCLDPVLYFLA) traverse the membrane as a helical segment. The Cytoplasmic segment spans residues 309 to 374 (GQRLVRFARD…AGSETKDIRL (66 aa)). A disordered region spans residues 318 to 374 (DAKPATEPTPSPQARRKLGLHRPNRTDTVRKDLSISSDDSRRTESTPAGSETKDIRL). Basic residues predominate over residues 331–340 (ARRKLGLHRP). Residues 341–361 (NRTDTVRKDLSISSDDSRRTE) show a composition bias toward basic and acidic residues.

Belongs to the G-protein coupled receptor 1 family.

The protein localises to the cell membrane. Its function is as follows. Receptor for ATP and UTP coupled to G-proteins that activate a phosphatidylinositol-calcium second messenger system. The affinity range is UTP = ATP &gt; ATP-gamma-S &gt;&gt; 2-methylthio-ATP = ADP. This is P2Y purinoceptor 2 (P2ry2) from Rattus norvegicus (Rat).